A 79-amino-acid polypeptide reads, in one-letter code: Protein GOLVEN 2 (79 aa).

Positions 1–26 (MAIRVSHKSFLVALLLILFISSPTQA) are cleaved as a signal peptide. Positions 27-65 (RSLREVVRNRTLLVVEKSQESRKIRHEGGGSDVDGLMDM) are excised as a propeptide. Positions 49 to 79 (KIRHEGGGSDVDGLMDMDYNSANKKRPIHNR) are disordered. Residue Tyr-67 is modified to Sulfotyrosine. A Hydroxyproline modification is found at Pro-75.

It belongs to the RGF family. Binds to LRR receptor-like serine/threonine-protein kinases to trigger their dimerization with SERK proteins and subsequent signaling. In terms of tissue distribution, expressed in siliques, stems, hypocotyls, shoot apex, leaves, flowers and cotyledons, and, to a lower extent, in roots.

The protein localises to the secreted. It localises to the endoplasmic reticulum. Signaling peptide (root growth factor) that regulates the pattern of root growth and lateral root development by modulating the length and the number of cortical cells in the root apical meristem (RAM), and the anticlinal asymmetric cell divisions in lateral root initiation cells. Also involved in the regulation of hypocotyl bending and root gravitropism, probably by influencing the formation of auxin gradients. Maintains the postembryonic root stem cell niche. In Arabidopsis thaliana (Mouse-ear cress), this protein is Protein GOLVEN 2.